We begin with the raw amino-acid sequence, 796 residues long: Peroxisome proliferator-activated receptor gamma coactivator 1-alpha (796 aa).

K77 is modified (N6-acetyllysine). The segment at 98-138 (PVDEDGLPSFDALTDGDVTTENEASPSSMPDGTPPPQEAEE) is disordered. A compositionally biased stretch (polar residues) spans 114-127 (DVTTENEASPSSMP). Residues 142-146 (LKKLL) carry the LXXLL motif motif. K144 bears the N6-acetyllysine mark. T176 carries the post-translational modification Phosphothreonine; by AMPK. N6-acetyllysine is present on K182. The disordered stretch occupies residues 211-274 (YLTTNDDPPH…PNDPKGSPFE (64 aa)). Residues 217–235 (DPPHTKPTETRNSSRDKCT) are compositionally biased toward basic and acidic residues. The segment covering 242-258 (TQSQSQHLQAKPTSLSL) has biased composition (polar residues). Residues K252, K269, K276, and K319 each carry the N6-acetyllysine modification. The tract at residues 288-349 (GTAGLTPPTT…NNSTKKGPEQ (62 aa)) is disordered. An interaction with PPARG region spans residues 291-337 (GLTPPTTPPHKANQDNPFRASPKLKPPCKTVVPPPSKKTRYSESSGT). Residues 332–344 (SESSGTHGNNSTK) show a composition bias toward polar residues. An N6-acetyllysine mark is found at K345, K411, and K449. The tract at residues 348-796 (EQSELYAQLS…LKEAQRSLRR (449 aa)) is mediates interaction with RNF34. The disordered stretch occupies residues 463-487 (HFGHPSQAVFDDEADKTSELRDSDF). A compositionally biased stretch (basic and acidic residues) spans 477–486 (DKTSELRDSD). A Phosphoserine; by AMPK modification is found at S537. Disordered stretches follow at residues 541–637 (FNSP…SYEE) and 648–667 (YRREYEKRESERAKQRERQR). Positions 568 to 603 (RSFSQHRSCSRSPYSRSRSRSPGSRSSSRSCYYSES) are enriched in low complexity. Basic residues predominate over residues 620-629 (SRSRSPYSRR). Residues 675-751 (RVIYVGKIRP…TDFELYFCGR (77 aa)) form the RRM domain. An N6-acetyllysine mark is found at K756 and K777.

As to quaternary structure, homooligomer. Interacts with MYBBP1A; inhibits MYBBP1A transcriptional activation. Interacts with PRDM16, LPIN1 and PML. Interacts (via LXXLL motif) with RORA and RORC (via AF-2 motif); activates RORA and RORC transcriptional activation. Interacts with LRPPRC. Interacts with FOXO1. Interacts with NR5A2. Post-translationally, phosphorylation by AMPK in skeletal muscle increases activation of its own promoter. Phosphorylated by CLK2. In terms of processing, heavily acetylated by KAT2A/GCN5 under conditions of high nutrients, leading to inactivation of PPARGC1A. Deacetylated by SIRT1 in low nutrients/high NAD conditions, leading to its activation. Ubiquitinated. Ubiquitination by RNF34 induces proteasomal degradation.

It localises to the nucleus. The protein localises to the PML body. Its function is as follows. Transcriptional coactivator for steroid receptors and nuclear receptors. Greatly increases the transcriptional activity of PPARG and thyroid hormone receptor on the uncoupling protein promoter. Can regulate key mitochondrial genes that contribute to the program of adaptive thermogenesis. Plays an essential role in metabolic reprogramming in response to dietary availability through coordination of the expression of a wide array of genes involved in glucose and fatty acid metabolism. Acts as a key regulator of gluconeogenesis: stimulates hepatic gluconeogenesis by increasing the expression of gluconeogenic enzymes, and acting together with FOXO1 to promote the fasting gluconeogenic program. Induces the expression of PERM1 in the skeletal muscle in an ESRRA-dependent manner. Also involved in the integration of the circadian rhythms and energy metabolism. Required for oscillatory expression of clock genes, such as BMAL1 and NR1D1, through the coactivation of RORA and RORC, and metabolic genes, such as PDK4 and PEPCK. The sequence is that of Peroxisome proliferator-activated receptor gamma coactivator 1-alpha (PPARGC1A) from Sus scrofa (Pig).